The chain runs to 211 residues: Transcriptional regulator GfcR (211 aa).

Belongs to the purine/pyrimidine phosphoribosyltransferase family. GfcR subfamily.

In terms of biological role, DNA-binding transcriptional regulator that functions as a regulator of central sugar catabolic pathways. The chain is Transcriptional regulator GfcR from Halorubrum lacusprofundi (strain ATCC 49239 / DSM 5036 / JCM 8891 / ACAM 34).